Consider the following 158-residue polypeptide: NAD(P)H-quinone oxidoreductase subunit N (158 aa).

Belongs to the complex I NdhN subunit family. As to quaternary structure, NDH-1 can be composed of about 15 different subunits; different subcomplexes with different compositions have been identified which probably have different functions.

The protein resides in the cellular thylakoid membrane. The catalysed reaction is a plastoquinone + NADH + (n+1) H(+)(in) = a plastoquinol + NAD(+) + n H(+)(out). The enzyme catalyses a plastoquinone + NADPH + (n+1) H(+)(in) = a plastoquinol + NADP(+) + n H(+)(out). Its function is as follows. NDH-1 shuttles electrons from an unknown electron donor, via FMN and iron-sulfur (Fe-S) centers, to quinones in the respiratory and/or the photosynthetic chain. The immediate electron acceptor for the enzyme in this species is believed to be plastoquinone. Couples the redox reaction to proton translocation, and thus conserves the redox energy in a proton gradient. Cyanobacterial NDH-1 also plays a role in inorganic carbon-concentration. The polypeptide is NAD(P)H-quinone oxidoreductase subunit N (Microcystis aeruginosa (strain NIES-843 / IAM M-2473)).